A 152-amino-acid chain; its full sequence is Large ribosomal subunit protein bL9 (152 aa).

The protein belongs to the bacterial ribosomal protein bL9 family.

Its function is as follows. Binds to the 23S rRNA. The protein is Large ribosomal subunit protein bL9 of Gloeothece citriformis (strain PCC 7424) (Cyanothece sp. (strain PCC 7424)).